The sequence spans 359 residues: Fructose-bisphosphate aldolase (359 aa).

Ser50 is a binding site for D-glyceraldehyde 3-phosphate. Residue Asp83 is the Proton donor of the active site. Positions 84, 105, 142, and 198 each coordinate Zn(2+). Gly199 provides a ligand contact to dihydroxyacetone phosphate. His232 contributes to the Zn(2+) binding site. Dihydroxyacetone phosphate contacts are provided by residues 233–235 (GSS) and 275–278 (NIDT).

It belongs to the class II fructose-bisphosphate aldolase family. Zn(2+) serves as cofactor.

The catalysed reaction is beta-D-fructose 1,6-bisphosphate = D-glyceraldehyde 3-phosphate + dihydroxyacetone phosphate. It functions in the pathway carbohydrate degradation; glycolysis; D-glyceraldehyde 3-phosphate and glycerone phosphate from D-glucose: step 4/4. Functionally, catalyzes the aldol condensation of dihydroxyacetone phosphate (DHAP or glycerone-phosphate) with glyceraldehyde 3-phosphate (G3P) to form fructose 1,6-bisphosphate (FBP) in gluconeogenesis and the reverse reaction in glycolysis. This is Fructose-bisphosphate aldolase (fba) from Nostoc commune.